The chain runs to 403 residues: S-adenosylmethionine synthase (403 aa).

Position 17 (histidine 17) interacts with ATP. Position 19 (aspartate 19) interacts with Mg(2+). Glutamate 45 lines the K(+) pocket. L-methionine contacts are provided by glutamate 58 and glutamine 104. The interval 104-114 is flexible loop; sequence QSPDIAQGVDT. ATP is bound by residues 179 to 181, 250 to 251, aspartate 259, 265 to 266, alanine 282, and lysine 286; these read DGK, KF, and RK. An L-methionine-binding site is contributed by aspartate 259. Lysine 290 lines the L-methionine pocket.

This sequence belongs to the AdoMet synthase family. Homotetramer; dimer of dimers. Mg(2+) is required as a cofactor. K(+) serves as cofactor.

The protein resides in the cytoplasm. It catalyses the reaction L-methionine + ATP + H2O = S-adenosyl-L-methionine + phosphate + diphosphate. It participates in amino-acid biosynthesis; S-adenosyl-L-methionine biosynthesis; S-adenosyl-L-methionine from L-methionine: step 1/1. Its function is as follows. Catalyzes the formation of S-adenosylmethionine (AdoMet) from methionine and ATP. The overall synthetic reaction is composed of two sequential steps, AdoMet formation and the subsequent tripolyphosphate hydrolysis which occurs prior to release of AdoMet from the enzyme. In Mycobacterium tuberculosis (strain ATCC 25177 / H37Ra), this protein is S-adenosylmethionine synthase.